We begin with the raw amino-acid sequence, 361 residues long: S-adenosylmethionine decarboxylase proenzyme (361 aa).

Active-site residues include Glu13 and Glu16. The Schiff-base intermediate with substrate; via pyruvic acid role is filled by Ser73. Position 73 is a pyruvic acid (Ser); by autocatalysis (Ser73). Cys87 functions as the Proton donor; for catalytic activity in the catalytic mechanism. Active-site proton acceptor; for processing activity residues include Ser236 and His249.

The protein belongs to the eukaryotic AdoMetDC family. Pyruvate is required as a cofactor. Post-translationally, is synthesized initially as an inactive proenzyme. Formation of the active enzyme involves a self-maturation process in which the active site pyruvoyl group is generated from an internal serine residue via an autocatalytic post-translational modification. Two non-identical subunits are generated from the proenzyme in this reaction, and the pyruvate is formed at the N-terminus of the alpha chain, which is derived from the carboxyl end of the proenzyme. The post-translation cleavage follows an unusual pathway, termed non-hydrolytic serinolysis, in which the side chain hydroxyl group of the serine supplies its oxygen atom to form the C-terminus of the beta chain, while the remainder of the serine residue undergoes an oxidative deamination to produce ammonia and the pyruvoyl group blocking the N-terminus of the alpha chain.

It carries out the reaction S-adenosyl-L-methionine + H(+) = S-adenosyl 3-(methylsulfanyl)propylamine + CO2. It participates in amine and polyamine biosynthesis; S-adenosylmethioninamine biosynthesis; S-adenosylmethioninamine from S-adenosyl-L-methionine: step 1/1. The protein is S-adenosylmethionine decarboxylase proenzyme (SAMDC) of Nicotiana tabacum (Common tobacco).